The following is a 362-amino-acid chain: Cobalt-precorrin-5B C(1)-methyltransferase (362 aa).

It belongs to the CbiD family.

It catalyses the reaction Co-precorrin-5B + S-adenosyl-L-methionine = Co-precorrin-6A + S-adenosyl-L-homocysteine. It participates in cofactor biosynthesis; adenosylcobalamin biosynthesis; cob(II)yrinate a,c-diamide from sirohydrochlorin (anaerobic route): step 6/10. Functionally, catalyzes the methylation of C-1 in cobalt-precorrin-5B to form cobalt-precorrin-6A. This is Cobalt-precorrin-5B C(1)-methyltransferase from Geotalea daltonii (strain DSM 22248 / JCM 15807 / FRC-32) (Geobacter daltonii).